Here is a 112-residue protein sequence, read N- to C-terminus: Large ribosomal subunit protein uL22 (112 aa).

This sequence belongs to the universal ribosomal protein uL22 family. As to quaternary structure, part of the 50S ribosomal subunit.

Functionally, this protein binds specifically to 23S rRNA; its binding is stimulated by other ribosomal proteins, e.g. L4, L17, and L20. It is important during the early stages of 50S assembly. It makes multiple contacts with different domains of the 23S rRNA in the assembled 50S subunit and ribosome. In terms of biological role, the globular domain of the protein is located near the polypeptide exit tunnel on the outside of the subunit, while an extended beta-hairpin is found that lines the wall of the exit tunnel in the center of the 70S ribosome. The sequence is that of Large ribosomal subunit protein uL22 from Akkermansia muciniphila (strain ATCC BAA-835 / DSM 22959 / JCM 33894 / BCRC 81048 / CCUG 64013 / CIP 107961 / Muc).